A 245-amino-acid chain; its full sequence is Uridylate kinase (245 aa).

16-19 (KLSG) contacts ATP. UMP is bound at residue Gly-58. Residues Gly-59 and Arg-63 each contribute to the ATP site. Residues Asp-78 and 139–146 (TGNPFFTT) contribute to the UMP site. Residues Thr-166, Tyr-172, and Asp-175 each coordinate ATP.

This sequence belongs to the UMP kinase family. As to quaternary structure, homohexamer.

Its subcellular location is the cytoplasm. It catalyses the reaction UMP + ATP = UDP + ADP. It functions in the pathway pyrimidine metabolism; CTP biosynthesis via de novo pathway; UDP from UMP (UMPK route): step 1/1. Inhibited by UTP. In terms of biological role, catalyzes the reversible phosphorylation of UMP to UDP. The polypeptide is Uridylate kinase (Idiomarina loihiensis (strain ATCC BAA-735 / DSM 15497 / L2-TR)).